An 89-amino-acid chain; its full sequence is Large ribosomal subunit protein bL27 (89 aa).

Residues 1-20 are disordered; the sequence is MAHKKAGGSSRNGRDSAGRR.

Belongs to the bacterial ribosomal protein bL27 family.

This chain is Large ribosomal subunit protein bL27, found in Zymomonas mobilis subsp. mobilis (strain ATCC 31821 / ZM4 / CP4).